The sequence spans 85 residues: Scratcher peptide (85 aa).

Positions Met-1–Pro-24 are cleaved as a signal peptide. A propeptide spanning residues Gly-25–Phe-38 is cleaved from the precursor. Glu-47 carries the post-translational modification 4-carboxyglutamate. Asp-67 bears the Aspartic acid 1-amide mark. Residues Lys-68–Met-85 constitute a propeptide that is removed on maturation.

Belongs to the conotoxin J superfamily. Contains 2 disulfide bonds. In terms of tissue distribution, expressed by the venom duct.

It localises to the secreted. Causes scratching in mice. In Conus geographus (Geography cone), this protein is Scratcher peptide.